Reading from the N-terminus, the 184-residue chain is Nucleoside triphosphate pyrophosphatase (184 aa).

The active-site Proton acceptor is D66.

The protein belongs to the Maf family. A divalent metal cation serves as cofactor.

It localises to the cytoplasm. It carries out the reaction a ribonucleoside 5'-triphosphate + H2O = a ribonucleoside 5'-phosphate + diphosphate + H(+). The catalysed reaction is a 2'-deoxyribonucleoside 5'-triphosphate + H2O = a 2'-deoxyribonucleoside 5'-phosphate + diphosphate + H(+). Functionally, nucleoside triphosphate pyrophosphatase. May have a dual role in cell division arrest and in preventing the incorporation of modified nucleotides into cellular nucleic acids. The chain is Nucleoside triphosphate pyrophosphatase from Prochlorococcus marinus (strain MIT 9313).